Here is a 91-residue protein sequence, read N- to C-terminus: Potassium channel toxin AaTXK-beta (91 aa).

An N-terminal signal peptide occupies residues 1–19 (MQRNLVVLLFLGMVALSSC). A propeptide spanning residues 20–27 (GLREKHVQ) is cleaved from the precursor. Residues 54 to 91 (QFGCPAYQGYCDDHCQDIKKEEGFCHGFKCKCGIPMGF) enclose the BetaSPN-type CS-alpha/beta domain. Intrachain disulfides connect C57/C78, C64/C83, and C68/C85.

The protein belongs to the long chain scorpion toxin family. Class 1 subfamily. Monomer (both chains). In terms of tissue distribution, expressed by the venom gland.

The protein resides in the secreted. In terms of biological role, inhibits voltage-gated potassium channels (Kv). Does not activate Kv7 channels. Its function is as follows. Peptide activator of Kv7.4/KCNQ4 channels. Also acts as a subtype-selective activator of channels formed by Kv7.3/KCNQ3, Kv7.2/Kv7.3 (KCNQ2/KCNQ3), Kv7.5/Kv7.3 (KCNQ3/KCNQ5) subunits. The protein is Potassium channel toxin AaTXK-beta of Androctonus australis (Sahara scorpion).